Reading from the N-terminus, the 881-residue chain is Alanine--tRNA ligase (881 aa).

Positions F422 to E440 are enriched in basic and acidic residues. Residues F422–V445 are disordered. Zn(2+)-binding residues include H567, H571, C669, and H673.

Belongs to the class-II aminoacyl-tRNA synthetase family. It depends on Zn(2+) as a cofactor.

The protein resides in the cytoplasm. The catalysed reaction is tRNA(Ala) + L-alanine + ATP = L-alanyl-tRNA(Ala) + AMP + diphosphate. Catalyzes the attachment of alanine to tRNA(Ala) in a two-step reaction: alanine is first activated by ATP to form Ala-AMP and then transferred to the acceptor end of tRNA(Ala). Also edits incorrectly charged Ser-tRNA(Ala) and Gly-tRNA(Ala) via its editing domain. This Pediococcus pentosaceus (strain ATCC 25745 / CCUG 21536 / LMG 10740 / 183-1w) protein is Alanine--tRNA ligase.